Here is a 247-residue protein sequence, read N- to C-terminus: 6-phosphogluconolactonase (247 aa).

It belongs to the glucosamine/galactosamine-6-phosphate isomerase family. 6-phosphogluconolactonase subfamily.

It catalyses the reaction 6-phospho-D-glucono-1,5-lactone + H2O = 6-phospho-D-gluconate + H(+). Its pathway is carbohydrate degradation; pentose phosphate pathway; D-ribulose 5-phosphate from D-glucose 6-phosphate (oxidative stage): step 2/3. Hydrolysis of 6-phosphogluconolactone to 6-phosphogluconate. This is 6-phosphogluconolactonase (pgl) from Mycobacterium bovis (strain ATCC BAA-935 / AF2122/97).